The following is a 221-amino-acid chain: Endonuclease V (221 aa).

The Mg(2+) site is built by D44 and D112.

It belongs to the endonuclease V family. Mg(2+) serves as cofactor.

Its subcellular location is the cytoplasm. It carries out the reaction Endonucleolytic cleavage at apurinic or apyrimidinic sites to products with a 5'-phosphate.. In terms of biological role, DNA repair enzyme involved in the repair of deaminated bases. Selectively cleaves double-stranded DNA at the second phosphodiester bond 3' to a deoxyinosine leaving behind the intact lesion on the nicked DNA. This is Endonuclease V from Nostoc sp. (strain PCC 7120 / SAG 25.82 / UTEX 2576).